Reading from the N-terminus, the 384-residue chain is Outer membrane protein assembly factor BamB (384 aa).

A signal peptide spans 1-16 (MKIRILVLILCALTQG). Residue C17 is the site of N-palmitoyl cysteine attachment. C17 carries the S-diacylglycerol cysteine lipid modification.

This sequence belongs to the BamB family. Part of the Bam complex.

The protein localises to the cell outer membrane. Functionally, part of the outer membrane protein assembly complex, which is involved in assembly and insertion of beta-barrel proteins into the outer membrane. The sequence is that of Outer membrane protein assembly factor BamB from Legionella pneumophila (strain Paris).